The following is a 581-amino-acid chain: NADP-dependent malic enzyme 1 (581 aa).

The active-site Proton donor is tyrosine 129. Arginine 182 is an NADP(+) binding site. Lysine 200 serves as the catalytic Proton acceptor. A divalent metal cation-binding residues include glutamate 272, aspartate 273, and aspartate 296. Residues aspartate 296, 325–341 (LFLGAGEAGTGIAELIA), and asparagine 437 each bind NADP(+).

Belongs to the malic enzymes family. In terms of assembly, homohexamers and homooctamers. Mg(2+) is required as a cofactor. It depends on Mn(2+) as a cofactor. Specifically expressed in roots (only in steles of secondary roots).

Its subcellular location is the cytoplasm. It carries out the reaction (S)-malate + NADP(+) = pyruvate + CO2 + NADPH. The enzyme catalyses oxaloacetate + H(+) = pyruvate + CO2. This chain is NADP-dependent malic enzyme 1 (NADP-ME1), found in Arabidopsis thaliana (Mouse-ear cress).